Consider the following 275-residue polypeptide: Exosome complex component Rrp42 (275 aa).

Belongs to the RNase PH family. Rrp42 subfamily. Component of the archaeal exosome complex. Forms a hexameric ring-like arrangement composed of 3 Rrp41-Rrp42 heterodimers. The hexameric ring associates with a trimer of Rrp4 and/or Csl4 subunits.

Its subcellular location is the cytoplasm. In terms of biological role, non-catalytic component of the exosome, which is a complex involved in RNA degradation. Contributes to the structuring of the Rrp41 active site. This Saccharolobus islandicus (strain Y.N.15.51 / Yellowstone #2) (Sulfolobus islandicus) protein is Exosome complex component Rrp42.